Consider the following 121-residue polypeptide: Large ribosomal subunit protein uL22 (121 aa).

This sequence belongs to the universal ribosomal protein uL22 family. In terms of assembly, part of the 50S ribosomal subunit.

This protein binds specifically to 23S rRNA; its binding is stimulated by other ribosomal proteins, e.g. L4, L17, and L20. It is important during the early stages of 50S assembly. It makes multiple contacts with different domains of the 23S rRNA in the assembled 50S subunit and ribosome. Functionally, the globular domain of the protein is located near the polypeptide exit tunnel on the outside of the subunit, while an extended beta-hairpin is found that lines the wall of the exit tunnel in the center of the 70S ribosome. This chain is Large ribosomal subunit protein uL22, found in Rickettsia massiliae (strain Mtu5).